The primary structure comprises 187 residues: Phosphatidylethanolamine-binding protein 1 (187 aa).

Phosphoserine is present on serine 13. Threonine 42 carries the post-translational modification Phosphothreonine. A phosphoserine mark is found at serine 52, serine 98, and serine 153. Residues 93–134 are interaction with RAF1; sequence KGNDISSGTVLSDYVGSGPPKGTGLHRYVWLVYEQSGPLKCD.

Belongs to the phosphatidylethanolamine-binding protein family. As to quaternary structure, has a tendency to form dimers by disulfide cross-linking. Interacts with RAF1 and this interaction is enhanced if RAF1 is phosphorylated on residues 'Ser-338', 'Ser-339', 'Tyr-340' and 'Tyr-341'. Interacts with ALOX15; in response to IL13/interleukin-13, prevents the interaction of PEBP1 with RAF1 to activate the ERK signaling cascade.

The protein localises to the cytoplasm. Functionally, binds ATP, opioids and phosphatidylethanolamine. Has lower affinity for phosphatidylinositol and phosphatidylcholine. Serine protease inhibitor which inhibits thrombin, neuropsin and chymotrypsin but not trypsin, tissue type plasminogen activator and elastase. Involved in the positive regulation of epithelial cell migration. Inhibits the kinase activity of RAF1 by inhibiting its activation and by dissociating the RAF1/MEK complex and acting as a competitive inhibitor of MEK phosphorylation. Its function is as follows. HCNP may be involved in the function of the presynaptic cholinergic neurons of the central nervous system. HCNP increases the production of choline acetyltransferase but not acetylcholinesterase. Seems to be mediated by a specific receptor. In Canis lupus familiaris (Dog), this protein is Phosphatidylethanolamine-binding protein 1 (PEBP1).